The sequence spans 317 residues: 4-hydroxy-3-methylbut-2-enyl diphosphate reductase (317 aa).

[4Fe-4S] cluster is bound at residue Cys-12. (2E)-4-hydroxy-3-methylbut-2-enyl diphosphate contacts are provided by His-41 and His-74. The dimethylallyl diphosphate site is built by His-41 and His-74. 2 residues coordinate isopentenyl diphosphate: His-41 and His-74. Cys-96 provides a ligand contact to [4Fe-4S] cluster. (2E)-4-hydroxy-3-methylbut-2-enyl diphosphate is bound at residue His-124. Position 124 (His-124) interacts with dimethylallyl diphosphate. Position 124 (His-124) interacts with isopentenyl diphosphate. Residue Glu-126 is the Proton donor of the active site. Thr-168 contributes to the (2E)-4-hydroxy-3-methylbut-2-enyl diphosphate binding site. Cys-198 provides a ligand contact to [4Fe-4S] cluster. Positions 226, 227, 228, and 270 each coordinate (2E)-4-hydroxy-3-methylbut-2-enyl diphosphate. Residues Ser-226, Ser-227, Asn-228, and Ser-270 each coordinate dimethylallyl diphosphate. Isopentenyl diphosphate is bound by residues Ser-226, Ser-227, Asn-228, and Ser-270.

It belongs to the IspH family. [4Fe-4S] cluster is required as a cofactor.

The enzyme catalyses isopentenyl diphosphate + 2 oxidized [2Fe-2S]-[ferredoxin] + H2O = (2E)-4-hydroxy-3-methylbut-2-enyl diphosphate + 2 reduced [2Fe-2S]-[ferredoxin] + 2 H(+). The catalysed reaction is dimethylallyl diphosphate + 2 oxidized [2Fe-2S]-[ferredoxin] + H2O = (2E)-4-hydroxy-3-methylbut-2-enyl diphosphate + 2 reduced [2Fe-2S]-[ferredoxin] + 2 H(+). It participates in isoprenoid biosynthesis; dimethylallyl diphosphate biosynthesis; dimethylallyl diphosphate from (2E)-4-hydroxy-3-methylbutenyl diphosphate: step 1/1. It functions in the pathway isoprenoid biosynthesis; isopentenyl diphosphate biosynthesis via DXP pathway; isopentenyl diphosphate from 1-deoxy-D-xylulose 5-phosphate: step 6/6. Catalyzes the conversion of 1-hydroxy-2-methyl-2-(E)-butenyl 4-diphosphate (HMBPP) into a mixture of isopentenyl diphosphate (IPP) and dimethylallyl diphosphate (DMAPP). Acts in the terminal step of the DOXP/MEP pathway for isoprenoid precursor biosynthesis. The protein is 4-hydroxy-3-methylbut-2-enyl diphosphate reductase of Hahella chejuensis (strain KCTC 2396).